A 114-amino-acid polypeptide reads, in one-letter code: Nuclear transition protein 2 (114 aa).

Residues 1-114 are disordered; sequence MDTKMQSLPT…KRRSSGRRYK (114 aa). 8 residues coordinate Zn(2+): histidine 12, histidine 14, histidine 16, histidine 24, cysteine 29, cysteine 31, cysteine 35, and cysteine 38. The segment covering 16 to 25 has biased composition (low complexity); it reads HSSSRPQSHT. A Nuclear localization signal motif is present at residues 87 to 95; that stretch reads GKVSKRKAV. Positions 90–114 are enriched in basic residues; that stretch reads SKRKAVRRRKRTHRAKRRSSGRRYK. Position 101 is a phosphothreonine; by PKA (threonine 101). Phosphoserine; by PKA is present on serine 109.

This sequence belongs to the nuclear transition protein 2 family. In terms of tissue distribution, testis.

The protein resides in the nucleus. Its subcellular location is the nucleolus. The protein localises to the chromosome. Functionally, plays a key role in the replacement of histones to protamine in the elongating spermatids of mammals. In condensing spermatids, loaded onto the nucleosomes, where it promotes the recruitment and processing of protamines, which are responsible for histone eviction. The protein is Nuclear transition protein 2 (Tnp2) of Rattus norvegicus (Rat).